Here is an 877-residue protein sequence, read N- to C-terminus: Polycomb protein Scm (877 aa).

The segment at 1 to 57 is disordered; it reads MSGGRDSSTSSGSNSAAPGASTNATSSASASASSTSTSASPGSTTSPASTQRQRGRP. The span at 7 to 50 shows a compositional bias: low complexity; sequence SSTSSGSNSAAPGASTNATSSASASASSTSTSASPGSTTSPAST. The FCS-type zinc-finger motif lies at 54-93; that stretch reads RGRPAKRATCTWCGEGKLPLQYVLPTQTGKKEFCSETCIA. 4 residues coordinate Zn(2+): C63, C66, C87, and C91. MBT repeat units follow at residues 175-273 and 281-382; these read FDWD…LQPP and SSWP…MQPP. 3 disordered regions span residues 535–621, 652–692, and 713–735; these read NSRK…SNKV, TNTN…GGSA, and ANVK…ASLP. T546 is modified (phosphothreonine). S549 and S550 each carry phosphoserine. The segment covering 560-569 has biased composition (polar residues); that stretch reads QSNSATTSPS. S585 bears the Phosphoserine mark. The segment covering 598–620 has biased composition (low complexity); sequence ASQQNSNHSLNNNNNSASKSSNK. Residues 724-735 are compositionally biased toward low complexity; the sequence is SPTTLSSSASLP. One can recognise an SAM domain in the interval 806–876; it reads WTIEEVIQYI…KVNGRRNNLA (71 aa).

This sequence belongs to the SCM family. Scm associates with the PRC1 core complex containing PSC, PC, PH and Sce/RING1. Forms homotypic and heterotypic interactions. Interacts with the SAM domain of ph-p via its SAM domain in vitro. Interacts with corto in vitro.

The protein resides in the nucleus. Polycomb group (PcG) protein. PcG proteins act by forming multiprotein complexes, which are required to maintain the transcriptionally repressive state of homeotic genes throughout development. PcG proteins are not required to initiate repression, but to maintain it during later stages of development. They probably act via the methylation of histones, rendering chromatin heritably changed in its expressibility. This is Polycomb protein Scm from Drosophila melanogaster (Fruit fly).